The primary structure comprises 2190 residues: Non-reducing polyketide synthase mapC' (2190 aa).

The interval 14 to 268 (VLFGPQCPDI…HHEAHREGIQ (255 aa)) is N-terminal acylcarrier protein transacylase domain (SAT). The region spanning 401–817 (ASPIAITGMA…GSNAALIVKE (417 aa)) is the Ketosynthase family 3 (KS3) domain. Active-site for beta-ketoacyl synthase activity residues include cysteine 566, histidine 701, and histidine 740. Positions 893–1190 (CFGGQNGLTA…NVTSALWAQG (298 aa)) are malonyl-CoA:ACP transacylase (MAT) domain. Residue serine 979 is the For acyl/malonyl transferase activity of the active site. An N-terminal hotdog fold region spans residues 1243-1375 (GQEAGLLCQL…GTVCLHQERS (133 aa)). Positions 1243–1552 (GQEAGLLCQL…FTSVSIRSLT (310 aa)) constitute a PKS/mFAS DH domain. Residues 1251 to 1556 (QLSESPDERL…SIRSLTRALA (306 aa)) are product template (PT) domain. The active-site Proton acceptor; for dehydratase activity is the histidine 1277. The C-terminal hotdog fold stretch occupies residues 1401 to 1552 (ASNGLKGSTV…FTSVSIRSLT (152 aa)). The active-site Proton donor; for dehydratase activity is the aspartate 1458. Positions 1597-1671 (ANDLATVQEM…GLVEHIFPGH (75 aa)) constitute a Carrier domain. Serine 1631 bears the O-(pantetheine 4'-phosphoryl)serine mark. Residues 1840–2187 (ATMSPSKPIK…AEGYEFLRTH (348 aa)) form a methyltransferase (CMeT) domain region. Catalysis depends on for thioesterase activity residues serine 1969, aspartate 2127, and histidine 2159.

The protein resides in the cytoplasm. Its subcellular location is the cytosol. It catalyses the reaction 3 malonyl-CoA + acetyl-CoA + S-adenosyl-L-methionine + H(+) = 5-methylorsellinate + S-adenosyl-L-homocysteine + 3 CO2 + 4 CoA. The protein operates within secondary metabolite biosynthesis; terpenoid biosynthesis. Functionally, non-reducing polyketide synthase; part of the gene cluster that mediates the biosynthesis of mycophenolic acid (MPA), the first isolated antibiotic natural product in the world obtained from a culture of Penicillium brevicompactum in 1893. MpaC' catalyzes the synthesis of 5-methylorsellinic acid (5MOA) via the condensation of 1 acetyl-CoA starter unit with 3 malonyl-CoA units and one methylation step. The first step of the pathway is the synthesis of 5-methylorsellinic acid (5MOA) by the cytosolic polyketide synthase mpaC. 5MOA is then converted to the phthalide compound 5,7-dihydroxy-4,6-dimethylphthalide (DHMP) by the endoplasmic reticulum-bound cytochrome P450 monooxygenase mpaDE. MpaDE first catalyzes hydroxylation of 5-MOA to 4,6-dihydroxy-2-(hydroxymethyl)-3-methylbenzoic acid (DHMB). MpaDE then acts as a lactone synthase that catalyzes the ring closure to convert DHMB into DHMP. The next step is the prenylation of DHMP by the Golgi apparatus-associated prenyltransferase mpaA to yield farnesyl-DHMP (FDHMP). The ER-bound oxygenase mpaB then mediates the oxidative cleavage the C19-C20 double bond in FDHMP to yield FDHMP-3C via a mycophenolic aldehyde intermediate. The O-methyltransferase mpaG catalyzes the methylation of FDHMP-3C to yield MFDHMP-3C. After the cytosolic methylation of FDHMP-3C, MFDHMP-3C enters into peroxisomes probably via free diffusion due to its low molecular weight. Upon a peroxisomal CoA ligation reaction, catalyzed by a beta-oxidation component enzyme acyl-CoA ligase ACL891, MFDHMP-3C-CoA would then be restricted to peroxisomes for the following beta-oxidation pathway steps. The peroxisomal beta-oxidation machinery than converts MFDHMP-3C-CoA into MPA_CoA, via a beta-oxidation chain-shortening process. Finally mpaH acts as a peroxisomal acyl-CoA hydrolase with high substrate specificity toward MPA-CoA to release the final product MPA. This Penicillium brevicompactum protein is Non-reducing polyketide synthase mapC'.